Here is a 217-residue protein sequence, read N- to C-terminus: MNKLYSLFLFLFIQLSIKYNNAKVTVDTVCKRGFLIQMSGHLECKCENDLVLVNEETCEEKVLKCDEKTVNKPCGDFSKCIKIDGNPVSYACKCNLGYDMVNNVCIPNECKNVTCGNGKCILDTSNPVKTGVCSCNIGKVPNVQDQNKCSKDGETKCSLKCLKENETCKAVDGIYKCDCKDGFIIDNESSICTAFSAYNILNLSIMFILFSVCFFIM.

An N-terminal signal peptide occupies residues 1–16 (MNKLYSLFLFLFIQLS). The 30-residue stretch at 30 to 59 (CKRGFLIQMSGHLECKCENDLVLVNEETCE) folds into the EGF-like 1; truncated domain. 3 consecutive EGF-like domains span residues 61-106 (KVLK…NVCI), 106-150 (IPNE…NKCS), and 153-193 (GETK…SICT). Intrachain disulfides connect cysteine 65/cysteine 80, cysteine 74/cysteine 92, cysteine 94/cysteine 105, cysteine 110/cysteine 120, cysteine 115/cysteine 133, cysteine 135/cysteine 149, cysteine 157/cysteine 168, cysteine 161/cysteine 177, and cysteine 179/cysteine 192. Residue asparagine 112 is glycosylated (N-linked (GlcNAc...) asparagine). 2 N-linked (GlcNAc...) asparagine glycosylation sites follow: asparagine 165 and asparagine 187. Residue serine 196 is the site of GPI-anchor amidated serine attachment. A propeptide spans 197–217 (AYNILNLSIMFILFSVCFFIM) (removed in mature form). A glycan (N-linked (GlcNAc...) asparagine) is linked at asparagine 202.

It is found in the cell membrane. This chain is 25 kDa ookinete surface antigen, found in Plasmodium falciparum (isolate NF54).